A 1328-amino-acid chain; its full sequence is ABC transporter C family member 7 (1328 aa).

Positions 104–389 (HKTSIIVQIF…LPQAIQRLLS (286 aa)) constitute an ABC transmembrane type-1 1 domain. 6 helical membrane passes run 112-132 (IFSA…ILYV), 140-160 (SFLV…FLSI), 224-244 (LILL…CWTI), 245-265 (GYSG…STFL), 287-307 (ISEM…LFFI), and 333-353 (MVVQ…YTLI). The ABC transporter 1 domain occupies 457-678 (IELVNNDSIE…FDFESIMKTK (222 aa)). 490 to 497 (GVVGSGKS) provides a ligand contact to ATP. A compositionally biased stretch (low complexity) spans 684 to 695 (LNNSNNNNNNNN). Residues 684–708 (LNNSNNNNNNNNNKEEEEDVENLEK) are disordered. Transmembrane regions (helical) follow at residues 762 to 782 (FIFF…FLLF), 802 to 822 (DSFY…FLGI), 894 to 914 (VLMM…LALF), 988 to 1008 (IGIK…FFSL), and 1014 to 1034 (GLSV…NWCI). Positions 765–1046 (FFTMIMMYII…YIEFSMKMSS (282 aa)) constitute an ABC transmembrane type-1 2 domain. The region spanning 1083–1316 (IQFKNVEIKY…INNQNSKFKK (234 aa)) is the ABC transporter 2 domain. Position 1117–1124 (1117–1124 (GKSGSGKS)) interacts with ATP.

This sequence belongs to the ABC transporter superfamily. ABCC family. Conjugate transporter (TC 3.A.1.208) subfamily.

The protein localises to the membrane. The polypeptide is ABC transporter C family member 7 (abcC7) (Dictyostelium discoideum (Social amoeba)).